Here is a 244-residue protein sequence, read N- to C-terminus: MICTLLRAVRCTERLHGCPGKPWFLPHSVPHRACSQTEPRWRWGLQEQNTTARPRCIWGVTQRSIWTQVRSPQSAKEDGSKQVSVHRSQGGETVLSTSQKVKEAGRDFTYLIVVLIGISITGGLFYTIFRELFSSSSPNKIYGKALEKCRSHPEVISVFGEPVKGYGEVTRRGRRQLVSFIEYKKDGLKHMRVKFYIQGSEPGKQGTVHLEVKENPESGEYEFRYIFVELEPYSRTIVVEDNRS.

The N-terminal 18 residues, 1–18, are a transit peptide targeting the mitochondrion; that stretch reads MICTLLRAVRCTERLHGC. The interval 69-89 is disordered; that stretch reads VRSPQSAKEDGSKQVSVHRSQ. The helical transmembrane segment at 108-128 threads the bilayer; it reads FTYLIVVLIGISITGGLFYTI.

This sequence belongs to the TIM21 family. In terms of assembly, component of the TIM23 complex. Component of the MITRAC (mitochondrial translation regulation assembly intermediate of cytochrome c oxidase complex) complex, the core components of this complex being COA3/MITRAC12 and COX14. Interacts with COA3 and MT-CO1/COX1.

It is found in the mitochondrion membrane. Participates in the translocation of transit peptide-containing proteins across the mitochondrial inner membrane. Also required for assembly of mitochondrial respiratory chain complex I and complex IV as component of the MITRAC (mitochondrial translation regulation assembly intermediate of cytochrome c oxidase complex) complex. Probably shuttles between the presequence translocase and respiratory-chain assembly intermediates in a process that promotes incorporation of early nuclear-encoded subunits into these complexes. The protein is Mitochondrial import inner membrane translocase subunit Tim21 (TIMM21) of Bos taurus (Bovine).